A 188-amino-acid chain; its full sequence is Protein GrpE (188 aa).

Positions 1-30 (MTKKTSHHKAEQKEKRAGEESGRESEVLDH) are disordered. The span at 8–30 (HKAEQKEKRAGEESGRESEVLDH) shows a compositional bias: basic and acidic residues.

Belongs to the GrpE family. As to quaternary structure, homodimer.

The protein resides in the cytoplasm. In terms of biological role, participates actively in the response to hyperosmotic and heat shock by preventing the aggregation of stress-denatured proteins, in association with DnaK and GrpE. It is the nucleotide exchange factor for DnaK and may function as a thermosensor. Unfolded proteins bind initially to DnaJ; upon interaction with the DnaJ-bound protein, DnaK hydrolyzes its bound ATP, resulting in the formation of a stable complex. GrpE releases ADP from DnaK; ATP binding to DnaK triggers the release of the substrate protein, thus completing the reaction cycle. Several rounds of ATP-dependent interactions between DnaJ, DnaK and GrpE are required for fully efficient folding. This is Protein GrpE from Chlorobium phaeobacteroides (strain BS1).